The following is a 556-amino-acid chain: Peptide chain release factor 3 (556 aa).

The region spanning 28–297 is the tr-type G domain; that stretch reads QQRRNFAIIS…AFLDYALKPG (270 aa). GTP-binding positions include 37–44, 105–109, and 159–162; these read SHPDAGKT, DTPGH, and NKMD.

The protein belongs to the TRAFAC class translation factor GTPase superfamily. Classic translation factor GTPase family. PrfC subfamily.

Its subcellular location is the cytoplasm. Its function is as follows. Increases the formation of ribosomal termination complexes and stimulates activities of RF-1 and RF-2. It binds guanine nucleotides and has strong preference for UGA stop codons. It may interact directly with the ribosome. The stimulation of RF-1 and RF-2 is significantly reduced by GTP and GDP, but not by GMP. This Synechococcus sp. (strain ATCC 27144 / PCC 6301 / SAUG 1402/1) (Anacystis nidulans) protein is Peptide chain release factor 3.